The chain runs to 320 residues: Cytochrome f (320 aa).

An N-terminal signal peptide occupies residues 1–35; the sequence is MQNRNTFSWVKEQMTRSIFVSMMIYIITRASISNA. The heme site is built by tyrosine 36, cysteine 56, cysteine 59, and histidine 60. Residues 286–306 traverse the membrane as a helical segment; it reads IQGLFLFLASVILAQIFLVLK.

The protein belongs to the cytochrome f family. As to quaternary structure, the 4 large subunits of the cytochrome b6-f complex are cytochrome b6, subunit IV (17 kDa polypeptide, petD), cytochrome f and the Rieske protein, while the 4 small subunits are PetG, PetL, PetM and PetN. The complex functions as a dimer. It depends on heme as a cofactor.

The protein resides in the plastid. It is found in the chloroplast thylakoid membrane. Functionally, component of the cytochrome b6-f complex, which mediates electron transfer between photosystem II (PSII) and photosystem I (PSI), cyclic electron flow around PSI, and state transitions. The protein is Cytochrome f of Amborella trichopoda.